The chain runs to 313 residues: Pyrimidine-specific ribonucleoside hydrolase RihB (313 aa).

Catalysis depends on Asp-11, which acts as the Proton acceptor. Ca(2+)-binding residues include Asp-11, Asp-16, and Val-124. Residues Gln-227 and His-239 each contribute to the substrate site. Asp-240 is a Ca(2+) binding site.

It belongs to the IUNH family. RihB subfamily. Homotetramer. Ca(2+) is required as a cofactor.

The enzyme catalyses a pyrimidine ribonucleoside + H2O = a pyrimidine nucleobase + D-ribose. Hydrolyzes cytidine or uridine to ribose and cytosine or uracil, respectively. Has a clear preference for cytidine over uridine. Strictly specific for ribonucleosides. This Escherichia coli O9:H4 (strain HS) protein is Pyrimidine-specific ribonucleoside hydrolase RihB.